Consider the following 660-residue polypeptide: PAN2-PAN3 deadenylation complex subunit PAN3 (660 aa).

The C3H1-type zinc finger occupies 7 to 36; that stretch reads SAKDTFCKNVLIYGYCKYENKGCAFSHTVK. Disordered stretches follow at residues 36–60 and 150–186; these read KPTS…TNAD and SPVM…PTSA. Residues 43–59 show a composition bias toward low complexity; that stretch reads GSQGSNATTNSSGNTNA. The PABPC-interacting motif-2 (PAM-2) signature appears at 59-79; that stretch reads ADMKKKFNFNTPSFQPSTVPN. The span at 150–159 shows a compositional bias: polar residues; sequence SPVMAQSVST. The segment at 252 to 528 is pseudokinase domain; the sequence is QTLPRSNLPD…LQEFNRNHLS (277 aa). Residues arginine 304, 358-365, and 415-416 contribute to the ATP site; these read DYFPNSNT and SK. Residues 529-567 adopt a coiled-coil conformation; that stretch reads RRILNFCSNAQDSQDFMESQLSTELENARVFRLITKLNF. Residues 568-660 form a knob domain region; it reads IIDRPEYDND…DSAFRTLTRG (93 aa).

It belongs to the protein kinase superfamily. PAN3 family. In terms of assembly, homodimer. Forms a heterotrimer with a catalytic subunit PAN2 to form the poly(A)-nuclease (PAN) deadenylation complex. Interacts (via PAM-2 motif) with poly(A)-binding protein PAB1 (via PABC domain), conferring substrate specificity of the enzyme complex.

Its subcellular location is the cytoplasm. Functionally, regulatory subunit of the poly(A)-nuclease (PAN) deadenylation complex, one of two cytoplasmic mRNA deadenylases involved in mRNA turnover. PAN specifically shortens poly(A) tails of RNA and the activity is stimulated by poly(A)-binding protein PAB1. PAN deadenylation is followed by rapid degradation of the shortened mRNA tails by the CCR4-NOT complex. Deadenylated mRNAs are then degraded by two alternative mechanisms, namely exosome-mediated 3'-5' exonucleolytic degradation, or deadenylation-dependent mRNA decaping and subsequent 5'-3' exonucleolytic degradation by XRN1. May also be involved in post-transcriptional maturation of mRNA poly(A) tails. PAN3 acts as a positive regulator for PAN activity, recruiting the catalytic subunit PAN2 to mRNA via its interaction with RNA and with PAB1. The polypeptide is PAN2-PAN3 deadenylation complex subunit PAN3 (Debaryomyces hansenii (strain ATCC 36239 / CBS 767 / BCRC 21394 / JCM 1990 / NBRC 0083 / IGC 2968) (Yeast)).